The primary structure comprises 200 residues: ATP-dependent Clp protease proteolytic subunit (200 aa).

Ser98 acts as the Nucleophile in catalysis. His123 is a catalytic residue.

This sequence belongs to the peptidase S14 family. As to quaternary structure, fourteen ClpP subunits assemble into 2 heptameric rings which stack back to back to give a disk-like structure with a central cavity, resembling the structure of eukaryotic proteasomes.

Its subcellular location is the cytoplasm. The catalysed reaction is Hydrolysis of proteins to small peptides in the presence of ATP and magnesium. alpha-casein is the usual test substrate. In the absence of ATP, only oligopeptides shorter than five residues are hydrolyzed (such as succinyl-Leu-Tyr-|-NHMec, and Leu-Tyr-Leu-|-Tyr-Trp, in which cleavage of the -Tyr-|-Leu- and -Tyr-|-Trp bonds also occurs).. Functionally, cleaves peptides in various proteins in a process that requires ATP hydrolysis. Has a chymotrypsin-like activity. Plays a major role in the degradation of misfolded proteins. The chain is ATP-dependent Clp protease proteolytic subunit from Ehrlichia canis (strain Jake).